The sequence spans 74 residues: Small ribosomal subunit protein bS18 (74 aa).

Belongs to the bacterial ribosomal protein bS18 family. In terms of assembly, part of the 30S ribosomal subunit. Forms a tight heterodimer with protein bS6.

Binds as a heterodimer with protein bS6 to the central domain of the 16S rRNA, where it helps stabilize the platform of the 30S subunit. The sequence is that of Small ribosomal subunit protein bS18 from Sphingopyxis alaskensis (strain DSM 13593 / LMG 18877 / RB2256) (Sphingomonas alaskensis).